The sequence spans 487 residues: GTPase Der (487 aa).

2 consecutive EngA-type G domains span residues 3 to 166 and 193 to 366; these read PVIA…PRDA and IKIA…KSAV. GTP contacts are provided by residues 9–16, 56–60, 118–121, 199–206, 246–250, and 311–314; these read GRPNVGKS, DTGGI, NKID, DTAGV, and NKWD. Residues 367 to 451 form the KH-like domain; it reads TRWPTSRLTQ…PIRIEYKGGE (85 aa). Residues 448–461 show a composition bias toward basic and acidic residues; the sequence is KGGENPYEGKKNTL. Residues 448–487 form a disordered region; sequence KGGENPYEGKKNTLTDRQVNKKRRLMSHHKKAEKKRRDKR. Residues 467-487 show a composition bias toward basic residues; that stretch reads NKKRRLMSHHKKAEKKRRDKR.

Belongs to the TRAFAC class TrmE-Era-EngA-EngB-Septin-like GTPase superfamily. EngA (Der) GTPase family. In terms of assembly, associates with the 50S ribosomal subunit.

GTPase that plays an essential role in the late steps of ribosome biogenesis. The polypeptide is GTPase Der (Pseudomonas putida (strain W619)).